The primary structure comprises 291 residues: Pantothenate synthetase (291 aa).

30 to 37 (MGNLHEGH) provides a ligand contact to ATP. His-37 (proton donor) is an active-site residue. Gln-61 lines the (R)-pantoate pocket. Gln-61 is a beta-alanine binding site. 149-152 (GEKD) is a binding site for ATP. A (R)-pantoate-binding site is contributed by Gln-155. ATP contacts are provided by residues Val-178 and 186-189 (MSSR).

This sequence belongs to the pantothenate synthetase family. Homodimer.

It is found in the cytoplasm. The enzyme catalyses (R)-pantoate + beta-alanine + ATP = (R)-pantothenate + AMP + diphosphate + H(+). It functions in the pathway cofactor biosynthesis; (R)-pantothenate biosynthesis; (R)-pantothenate from (R)-pantoate and beta-alanine: step 1/1. Catalyzes the condensation of pantoate with beta-alanine in an ATP-dependent reaction via a pantoyl-adenylate intermediate. The chain is Pantothenate synthetase from Aliivibrio fischeri (strain ATCC 700601 / ES114) (Vibrio fischeri).